Consider the following 95-residue polypeptide: Aspartyl/glutamyl-tRNA(Asn/Gln) amidotransferase subunit C (95 aa).

It belongs to the GatC family. Heterotrimer of A, B and C subunits.

The enzyme catalyses L-glutamyl-tRNA(Gln) + L-glutamine + ATP + H2O = L-glutaminyl-tRNA(Gln) + L-glutamate + ADP + phosphate + H(+). It catalyses the reaction L-aspartyl-tRNA(Asn) + L-glutamine + ATP + H2O = L-asparaginyl-tRNA(Asn) + L-glutamate + ADP + phosphate + 2 H(+). In terms of biological role, allows the formation of correctly charged Asn-tRNA(Asn) or Gln-tRNA(Gln) through the transamidation of misacylated Asp-tRNA(Asn) or Glu-tRNA(Gln) in organisms which lack either or both of asparaginyl-tRNA or glutaminyl-tRNA synthetases. The reaction takes place in the presence of glutamine and ATP through an activated phospho-Asp-tRNA(Asn) or phospho-Glu-tRNA(Gln). This is Aspartyl/glutamyl-tRNA(Asn/Gln) amidotransferase subunit C from Clostridium botulinum (strain Loch Maree / Type A3).